Here is a 159-residue protein sequence, read N- to C-terminus: Sumo-conjugating enzyme ubc9 (159 aa).

Residues 4–157 (ISSARLSEER…VKAQSKVYPP (154 aa)) form the UBC core domain. Cysteine 93 functions as the Glycyl thioester intermediate in the catalytic mechanism.

This sequence belongs to the ubiquitin-conjugating enzyme family.

The protein resides in the nucleus. The protein operates within protein modification; protein sumoylation. Functionally, accepts the ubiquitin-like protein sumo from the E1 complex and catalyzes its covalent attachment to other proteins with the help of an E3 ligase. The protein is Sumo-conjugating enzyme ubc9 (ubc9) of Dictyostelium discoideum (Social amoeba).